Here is a 180-residue protein sequence, read N- to C-terminus: Transcriptional repressor NrdR (180 aa).

The segment at 3–34 is a zinc-finger region; it reads CPYCQNTSSRVLESRSTEAGQSIRRRRECLQC. The region spanning 49 to 139 is the ATP-cone domain; it reads ISVLKKDKSK…VYGEFKGITD (91 aa). Positions 148-180 are disordered; sequence QQEERESSSSPEWSDAGEEATVIEDSSQVMASS. Positions 171-180 are enriched in polar residues; it reads EDSSQVMASS.

It belongs to the NrdR family. Requires Zn(2+) as cofactor.

Negatively regulates transcription of bacterial ribonucleotide reductase nrd genes and operons by binding to NrdR-boxes. This chain is Transcriptional repressor NrdR, found in Gloeothece citriformis (strain PCC 7424) (Cyanothece sp. (strain PCC 7424)).